The primary structure comprises 451 residues: Protoheme IX farnesyltransferase, mitochondrial (451 aa).

The next 6 helical transmembrane spans lie at 149–169, 240–260, 265–285, 289–309, 339–359, and 414–434; these read TILV…PATV, PTVA…YTSL, IINT…GWAA, LTHP…FPHF, VALR…YFNI, and KAFF…ILHK.

Belongs to the UbiA prenyltransferase family.

The protein localises to the mitochondrion membrane. In terms of biological role, converts protoheme IX and farnesyl diphosphate to heme O. The protein is Protoheme IX farnesyltransferase, mitochondrial (COX10) of Candida glabrata (strain ATCC 2001 / BCRC 20586 / JCM 3761 / NBRC 0622 / NRRL Y-65 / CBS 138) (Yeast).